The following is a 262-amino-acid chain: Nurim (262 aa).

Residues 1-4 (MAPA) lie on the Nuclear side of the membrane. Residues 5 to 28 (LLLVPAALASFILAFGTGVEFVRF) form a helical membrane-spanning segment. Residues 29 to 58 (TSLRPLLGGIPESGGPDARQGWLAALQDQS) are Perinuclear space-facing. The helical transmembrane segment at 59–80 (ILVPLAWDLGLLLLFVGQHSLM) threads the bilayer. The Nuclear portion of the chain corresponds to 81-97 (ATETVKAWMSRYFGVLQ). Residues 98–114 (RSLYVACTALALQLVMR) traverse the membrane as a helical segment. At 115 to 133 (YWEPVPRGPVLWEAQAEPW) the chain is on the perinuclear space side. The helical transmembrane segment at 134 to 164 (ATWVPLLCFVLHVISWLLIFSILLVFDYAEL) threads the bilayer. At 165–191 (MGLKQVYYHVLGLGEPLALKSPRALRL) the chain is on the nuclear side. The helical transmembrane segment at 192 to 210 (FSHLRHPVCVELLTVLWVV) threads the bilayer. Over 211-216 (PTLGTD) the chain is Perinuclear space. The chain crosses the membrane as a helical span at residues 217-234 (RLLLALLLTLYLGLAHGL). Residues 235–262 (DQQDLRYLRAQLQRKLHLLSRPQDGEAE) are Nuclear-facing.

This sequence belongs to the nurim family.

Its subcellular location is the nucleus inner membrane. This is Nurim (NRM) from Sus scrofa (Pig).